Here is a 473-residue protein sequence, read N- to C-terminus: Photosystem II CP43 reaction center protein (473 aa).

Positions 1 to 14 (MKTLYSLRRFYPVE) are excised as a propeptide. T15 bears the N-acetylthreonine mark. T15 carries the post-translational modification Phosphothreonine. 5 consecutive transmembrane segments (helical) span residues 69–93 (LFEVAHFVPEKPMYEQGLILLPHLA), 134–155 (LIGPETLEESFPFFGYVWKDKN), 178–200 (KALYFGGVYDTWAPGGGDVRKIT), 255–275 (KPFAWARRAFIWSGEAYLSYS), and 291–312 (WFNNTAYPSEFYGPTGPEASQA). E367 contacts [CaMn4O5] cluster. Residues 447–471 (RARAAAAGFEKGIDRDTEPVLSMTP) traverse the membrane as a helical segment.

The protein belongs to the PsbB/PsbC family. PsbC subfamily. PSII is composed of 1 copy each of membrane proteins PsbA, PsbB, PsbC, PsbD, PsbE, PsbF, PsbH, PsbI, PsbJ, PsbK, PsbL, PsbM, PsbT, PsbX, PsbY, PsbZ, Psb30/Ycf12, at least 3 peripheral proteins of the oxygen-evolving complex and a large number of cofactors. It forms dimeric complexes. The cofactor is Binds multiple chlorophylls and provides some of the ligands for the Ca-4Mn-5O cluster of the oxygen-evolving complex. It may also provide a ligand for a Cl- that is required for oxygen evolution. PSII binds additional chlorophylls, carotenoids and specific lipids..

The protein resides in the plastid. The protein localises to the chloroplast thylakoid membrane. Its function is as follows. One of the components of the core complex of photosystem II (PSII). It binds chlorophyll and helps catalyze the primary light-induced photochemical processes of PSII. PSII is a light-driven water:plastoquinone oxidoreductase, using light energy to abstract electrons from H(2)O, generating O(2) and a proton gradient subsequently used for ATP formation. This is Photosystem II CP43 reaction center protein from Angiopteris evecta (Mule's foot fern).